Here is a 511-residue protein sequence, read N- to C-terminus: Maturase K (511 aa).

This sequence belongs to the intron maturase 2 family. MatK subfamily.

Its subcellular location is the plastid. It is found in the chloroplast. Functionally, usually encoded in the trnK tRNA gene intron. Probably assists in splicing its own and other chloroplast group II introns. This is Maturase K from Psathyrostachys juncea (Russian wildrye).